Consider the following 432-residue polypeptide: Eukaryotic translation initiation factor 3 subunit E (432 aa).

The region spanning 221–401 is the PCI domain; it reads VYYNYPKGRD…MGVKSVSIHE (181 aa).

This sequence belongs to the eIF-3 subunit E family. As to quaternary structure, component of the eukaryotic translation initiation factor 3 (eIF-3) complex.

It localises to the cytoplasm. Functionally, component of the eukaryotic translation initiation factor 3 (eIF-3) complex, which is involved in protein synthesis of a specialized repertoire of mRNAs and, together with other initiation factors, stimulates binding of mRNA and methionyl-tRNAi to the 40S ribosome. The eIF-3 complex specifically targets and initiates translation of a subset of mRNAs involved in cell proliferation. The polypeptide is Eukaryotic translation initiation factor 3 subunit E (Caenorhabditis elegans).